The following is a 694-amino-acid chain: Soluble starch synthase 2-2, chloroplastic/amyloplastic (694 aa).

The transit peptide at 1–15 (MSGAIASSPAATLFL) directs the protein to the chloroplast. Positions 93 to 197 (KADHVEDSVS…DSENKESGPL (105 aa)) are disordered. Low complexity predominate over residues 127–142 (APVSKPKVDPSVPASK). Positions 156–176 (AALDKKEDVGVAEPLEAKADA) are enriched in basic and acidic residues. Positions 177–186 (GGDAGAVSSA) are enriched in low complexity. An ADP-alpha-D-glucose-binding site is contributed by lysine 217.

The protein belongs to the glycosyltransferase 1 family. Bacterial/plant glycogen synthase subfamily. Expressed in leaves and weakly in endosperm and roots.

It is found in the plastid. Its subcellular location is the amyloplast. The protein resides in the chloroplast. The catalysed reaction is [(1-&gt;4)-alpha-D-glucosyl](n) + ADP-alpha-D-glucose = [(1-&gt;4)-alpha-D-glucosyl](n+1) + ADP + H(+). Its pathway is glycan biosynthesis; starch biosynthesis. Functionally, may contribute to the deposition of transient starch in chloroplasts of leaves. This is Soluble starch synthase 2-2, chloroplastic/amyloplastic (SSII-2) from Oryza sativa subsp. japonica (Rice).